A 176-amino-acid polypeptide reads, in one-letter code: NADH-quinone oxidoreductase subunit I 2 (176 aa).

2 4Fe-4S ferredoxin-type domains span residues 45-77 and 87-116; these read IVLTRDPDGGERCVACYLCSAACPVDCISMEAA and RWFRINFSRCIFCGLCAEACPTLAIQMTPD. [4Fe-4S] cluster is bound by residues C57, C60, C63, C67, C96, C99, C102, and C106.

This sequence belongs to the complex I 23 kDa subunit family. NDH-1 is composed of 14 different subunits. Subunits NuoA, H, J, K, L, M, N constitute the membrane sector of the complex. The cofactor is [4Fe-4S] cluster.

The protein localises to the cell inner membrane. The enzyme catalyses a quinone + NADH + 5 H(+)(in) = a quinol + NAD(+) + 4 H(+)(out). Functionally, NDH-1 shuttles electrons from NADH, via FMN and iron-sulfur (Fe-S) centers, to quinones in the respiratory chain. The immediate electron acceptor for the enzyme in this species is believed to be ubiquinone. Couples the redox reaction to proton translocation (for every two electrons transferred, four hydrogen ions are translocated across the cytoplasmic membrane), and thus conserves the redox energy in a proton gradient. The protein is NADH-quinone oxidoreductase subunit I 2 of Geobacter sulfurreducens (strain ATCC 51573 / DSM 12127 / PCA).